Consider the following 344-residue polypeptide: DNA integrity scanning protein DisA (344 aa).

The DAC domain maps to 1–133; it reads MALLAPGTPI…GRRYLIERPE (133 aa). ATP is bound by residues glycine 61 and 92-96; that span reads TRHRT.

The protein belongs to the DisA family. As to quaternary structure, homooctamer. Requires Mg(2+) as cofactor.

The enzyme catalyses 2 ATP = 3',3'-c-di-AMP + 2 diphosphate. Its function is as follows. Participates in a DNA-damage check-point. DisA forms globular foci that rapidly scan along the chromosomes searching for lesions. In terms of biological role, also has diadenylate cyclase activity, catalyzing the condensation of 2 ATP molecules into cyclic di-AMP (c-di-AMP). c-di-AMP likely acts as a signaling molecule that may couple DNA integrity with a cellular process. The protein is DNA integrity scanning protein DisA of Cutibacterium acnes (strain DSM 16379 / KPA171202) (Propionibacterium acnes).